A 363-amino-acid polypeptide reads, in one-letter code: Chorismate synthase (363 aa).

Residues arginine 48 and arginine 54 each contribute to the NADP(+) site. FMN-binding positions include 125 to 127 (RSS), 237 to 238 (NA), glycine 277, 292 to 296 (KPTSS), and arginine 318.

It belongs to the chorismate synthase family. Homotetramer. It depends on FMNH2 as a cofactor.

It catalyses the reaction 5-O-(1-carboxyvinyl)-3-phosphoshikimate = chorismate + phosphate. It participates in metabolic intermediate biosynthesis; chorismate biosynthesis; chorismate from D-erythrose 4-phosphate and phosphoenolpyruvate: step 7/7. Its function is as follows. Catalyzes the anti-1,4-elimination of the C-3 phosphate and the C-6 proR hydrogen from 5-enolpyruvylshikimate-3-phosphate (EPSP) to yield chorismate, which is the branch point compound that serves as the starting substrate for the three terminal pathways of aromatic amino acid biosynthesis. This reaction introduces a second double bond into the aromatic ring system. The polypeptide is Chorismate synthase (Pseudomonas savastanoi pv. phaseolicola (strain 1448A / Race 6) (Pseudomonas syringae pv. phaseolicola (strain 1448A / Race 6))).